The primary structure comprises 357 residues: DNA polymerase IV 2 (357 aa).

The UmuC domain maps to 4-184 (IIHVDMDAFY…LAVKKFHGVG (181 aa)). The Mg(2+) site is built by aspartate 8 and aspartate 102. Residue glutamate 103 is part of the active site.

Belongs to the DNA polymerase type-Y family. In terms of assembly, monomer. Mg(2+) serves as cofactor.

The protein resides in the cytoplasm. The enzyme catalyses DNA(n) + a 2'-deoxyribonucleoside 5'-triphosphate = DNA(n+1) + diphosphate. Its function is as follows. Poorly processive, error-prone DNA polymerase involved in untargeted mutagenesis. Copies undamaged DNA at stalled replication forks, which arise in vivo from mismatched or misaligned primer ends. These misaligned primers can be extended by PolIV. Exhibits no 3'-5' exonuclease (proofreading) activity. May be involved in translesional synthesis, in conjunction with the beta clamp from PolIII. The protein is DNA polymerase IV 2 (dinB2) of Agrobacterium fabrum (strain C58 / ATCC 33970) (Agrobacterium tumefaciens (strain C58)).